The primary structure comprises 464 residues: ATP synthase subunit beta (464 aa).

G148–T155 contacts ATP.

Belongs to the ATPase alpha/beta chains family. In terms of assembly, F-type ATPases have 2 components, CF(1) - the catalytic core - and CF(0) - the membrane proton channel. CF(1) has five subunits: alpha(3), beta(3), gamma(1), delta(1), epsilon(1). CF(0) has three main subunits: a(1), b(2) and c(9-12). The alpha and beta chains form an alternating ring which encloses part of the gamma chain. CF(1) is attached to CF(0) by a central stalk formed by the gamma and epsilon chains, while a peripheral stalk is formed by the delta and b chains.

It is found in the cell inner membrane. The enzyme catalyses ATP + H2O + 4 H(+)(in) = ADP + phosphate + 5 H(+)(out). Produces ATP from ADP in the presence of a proton gradient across the membrane. The catalytic sites are hosted primarily by the beta subunits. The chain is ATP synthase subunit beta from Acinetobacter baumannii (strain AB0057).